Consider the following 1854-residue polypeptide: Calcium-channel protein cch1 (1854 aa).

Residues 1-15 (MSSSSNSDPSSSPDN) are compositionally biased toward low complexity. The interval 1-33 (MSSSSNSDPSSSPDNTDFIPLKDNPKDTSSYIN) is disordered. The N-linked (GlcNAc...) asparagine glycan is linked to N40. 3 consecutive transmembrane segments (helical) span residues 184–204 (HPLYNIFIFVVIVLHAVLLMI), 220–240 (IIVIGILYTLEMLLKIYLFGF), and 274–294 (DFVAIVALWISVIGKKQQGIF). N310 is a glycosylation site (N-linked (GlcNAc...) asparagine). A run of 8 helical transmembrane segments spans residues 328–348 (PLVQVVSFNAFFGVMIAILGV), 427–447 (FFNSLELIFVIMSSNGFTDIM), 461–481 (LFIISAYFLTLWLMSLVIAVV), 514–534 (YLFYSNFIWISFIVAQFVTLC), 549–569 (LIFYACVDFLLAAEVILRFFA), 581–601 (YTNLVDIVLAVLNLVTLLPSI), 606–626 (VAFGWLSIFAIARIYRCILLI), and 642–662 (QLLNLMLFLVIVLFIASLCAV). N699 carries an N-linked (GlcNAc...) asparagine glycan. A helical transmembrane segment spans residues 723–743 (FFTLWFLFSNNVVLSMFIAVI). Residue N786 is glycosylated (N-linked (GlcNAc...) asparagine). A run of 3 helical transmembrane segments spans residues 946–966 (VFIYACILTAVIIECIATPIY), 980–1000 (FVWTEVAFATIFTIEAAIKII), and 1021–1041 (FFVLVTLWINLYAVLTSHALL). N1058 carries an N-linked (GlcNAc...) asparagine glycan. 2 consecutive transmembrane segments (helical) span residues 1075-1095 (FFKIFSAAVVSATLLIPFALW) and 1148-1168 (FPHALLALFEIASIEGWVDIM). N1184 is a glycosylation site (N-linked (GlcNAc...) asparagine). 4 consecutive transmembrane segments (helical) span residues 1193-1213 (FVLFNLVSMIYILTLFIAIII), 1274-1294 (FTGLYIVHLLFLLTIFYPCPI), 1302-1322 (SIFLILSICYTINICVKVYGL), and 1331-1351 (FWNMFDVVVTLGSLTCNIAIL). N-linked (GlcNAc...) asparagine glycosylation occurs at N1356. A run of 3 helical transmembrane segments spans residues 1358–1378 (SLTLLQTTLLVLVTVHLIPKF), 1393–1413 (PSIFSLIATWIVLYITFAIAF), and 1486–1506 (FIAWNIISMYIFVNMFITVVF). N1508 and N1773 each carry an N-linked (GlcNAc...) asparagine glycan. Residues 1764–1792 (TIASGEGDDNHSVEDHLKVPTDNEPRRSP) are disordered. Basic and acidic residues predominate over residues 1771 to 1790 (DDNHSVEDHLKVPTDNEPRR).

The protein belongs to the calcium channel alpha-1 subunit (TC 1.A.1.11) family. Interacts with yam8 to form a Ca(2+) influx channel.

The protein localises to the cell membrane. Voltage-gated, high-affinity calcium channel that functions together with yam8 to mediate calcium entry into cells. Required during conditions of environmental stress. This chain is Calcium-channel protein cch1 (cch1), found in Schizosaccharomyces pombe (strain 972 / ATCC 24843) (Fission yeast).